Consider the following 557-residue polypeptide: Dihydroxy-acid dehydratase (557 aa).

Asp78 is a Mg(2+) binding site. Position 119 (Cys119) interacts with [2Fe-2S] cluster. The Mg(2+) site is built by Asp120 and Lys121. Lys121 is subject to N6-carboxylysine. Residue Cys192 coordinates [2Fe-2S] cluster. Glu442 is a binding site for Mg(2+). The active-site Proton acceptor is the Ser468.

The protein belongs to the IlvD/Edd family. As to quaternary structure, homodimer. [2Fe-2S] cluster serves as cofactor. Requires Mg(2+) as cofactor.

The enzyme catalyses (2R)-2,3-dihydroxy-3-methylbutanoate = 3-methyl-2-oxobutanoate + H2O. It catalyses the reaction (2R,3R)-2,3-dihydroxy-3-methylpentanoate = (S)-3-methyl-2-oxopentanoate + H2O. The protein operates within amino-acid biosynthesis; L-isoleucine biosynthesis; L-isoleucine from 2-oxobutanoate: step 3/4. It functions in the pathway amino-acid biosynthesis; L-valine biosynthesis; L-valine from pyruvate: step 3/4. In terms of biological role, functions in the biosynthesis of branched-chain amino acids. Catalyzes the dehydration of (2R,3R)-2,3-dihydroxy-3-methylpentanoate (2,3-dihydroxy-3-methylvalerate) into 2-oxo-3-methylpentanoate (2-oxo-3-methylvalerate) and of (2R)-2,3-dihydroxy-3-methylbutanoate (2,3-dihydroxyisovalerate) into 2-oxo-3-methylbutanoate (2-oxoisovalerate), the penultimate precursor to L-isoleucine and L-valine, respectively. This is Dihydroxy-acid dehydratase from Bacillus anthracis (strain A0248).